A 251-amino-acid chain; its full sequence is Elongator complex protein 6 (251 aa).

It belongs to the ELP6 family. In terms of assembly, component of the elongator complex composed of Elp1, Elp2, Elp3, Elp4, Elp5 and Elp6. The elongator complex associates with and stabilizes microtubules; efficient interaction requires the full complex. Interacts with InR/Insulin-like receptor; the interaction may stabilize Elp6.

Its subcellular location is the cytoplasm. The protein resides in the nucleus. It is found in the cytoskeleton. The protein localises to the spindle. The protein operates within tRNA modification; 5-methoxycarbonylmethyl-2-thiouridine-tRNA biosynthesis. In terms of biological role, component of the elongator complex, which is required for multiple tRNA modifications, including mcm5U (5-methoxycarbonylmethyl uridine), mcm5s2U (5-methoxycarbonylmethyl-2-thiouridine), and ncm5U (5-carbamoylmethyl uridine). The elongator complex catalyzes formation of carboxymethyluridine in the wobble base at position 34 in tRNAs. Binding by the elongator complex stabilizes microtubules and promotes their growth. This induces central spindle asymmetry, promoting polarized signaling endosome trafficking during asymmetric cell division and cell fate assignation of sensory organ precursor cells. Required in germ line cells for microtubule organization involved in oocyte polarization and chromosome organization. Involved in InR-TOR (insulin-like receptor-target of rapamycin) signaling regulation of cellular metabolism, autophagy and apoptosis. In Drosophila melanogaster (Fruit fly), this protein is Elongator complex protein 6.